Reading from the N-terminus, the 243-residue chain is tRNA (guanine-N(1)-)-methyltransferase (243 aa).

S-adenosyl-L-methionine is bound by residues G108 and L127–L132.

It belongs to the RNA methyltransferase TrmD family. In terms of assembly, homodimer.

Its subcellular location is the cytoplasm. The enzyme catalyses guanosine(37) in tRNA + S-adenosyl-L-methionine = N(1)-methylguanosine(37) in tRNA + S-adenosyl-L-homocysteine + H(+). Its function is as follows. Specifically methylates guanosine-37 in various tRNAs. This is tRNA (guanine-N(1)-)-methyltransferase from Streptococcus equi subsp. zooepidemicus (strain MGCS10565).